A 46-amino-acid chain; its full sequence is MTSQPSKKTYNAPSLVQRGKFARTTAGSQLVYREWVGHSNVIKPGP.

Positions 1 to 26 (MTSQPSKKTYNAPSLVQRGKFARTTA) are excised as a propeptide. Residues 27–34 (GSQLVYRE) constitute a cross-link (isoglutamyl glycine isopeptide (Gly-Glu)).

Post-translationally, the linear precursor LarA is probably cleaved by the putative peptidase LarD, generating linear 18-residue Lariatin-A or 20-residue Lariatin-B. These linear peptides are probably cross-linked by LarB. Finally, lariatins A and B may be exported by ABC transporter LarE.

Peptide antibiotic with selective activity against Mycobacterium species (M.smegmatis, MIC=3.13 ug/ml and M.tuberculosis, MIC=0.39 ug/ml). it is plausible that the target of lariatins lies within the cell wall in mycobacteria. In terms of biological role, peptide antibiotic with selective activity against Mycobacterium species (M.smegmatis, MIC=6.25 ug/ml). The polypeptide is Lariatin (Rhodococcus jostii).